The following is a 354-amino-acid chain: S-adenosylmethionine:tRNA ribosyltransferase-isomerase (354 aa).

It belongs to the QueA family. Monomer.

The protein resides in the cytoplasm. It carries out the reaction 7-aminomethyl-7-carbaguanosine(34) in tRNA + S-adenosyl-L-methionine = epoxyqueuosine(34) in tRNA + adenine + L-methionine + 2 H(+). It functions in the pathway tRNA modification; tRNA-queuosine biosynthesis. Functionally, transfers and isomerizes the ribose moiety from AdoMet to the 7-aminomethyl group of 7-deazaguanine (preQ1-tRNA) to give epoxyqueuosine (oQ-tRNA). In Pseudomonas syringae pv. tomato (strain ATCC BAA-871 / DC3000), this protein is S-adenosylmethionine:tRNA ribosyltransferase-isomerase.